A 76-amino-acid polypeptide reads, in one-letter code: uncharacterized protein (76 aa).

2 consecutive EF-hand domains span residues 9–44 (EMDE…LGEN) and 43–76 (ENLT…IHIS).

Its subcellular location is the cytoplasm. It is found in the nucleus. This is an uncharacterized protein from Schizosaccharomyces pombe (strain 972 / ATCC 24843) (Fission yeast).